The following is a 420-amino-acid chain: 3-isopropylmalate dehydratase large subunit (420 aa).

Cys300, Cys360, and Cys363 together coordinate [4Fe-4S] cluster.

It belongs to the aconitase/IPM isomerase family. LeuC type 2 subfamily. Heterodimer of LeuC and LeuD. Requires [4Fe-4S] cluster as cofactor.

The enzyme catalyses (2R,3S)-3-isopropylmalate = (2S)-2-isopropylmalate. The protein operates within amino-acid biosynthesis; L-leucine biosynthesis; L-leucine from 3-methyl-2-oxobutanoate: step 2/4. Catalyzes the isomerization between 2-isopropylmalate and 3-isopropylmalate, via the formation of 2-isopropylmaleate. In Heliobacterium modesticaldum (strain ATCC 51547 / Ice1), this protein is 3-isopropylmalate dehydratase large subunit.